Here is a 370-residue protein sequence, read N- to C-terminus: 4-hydroxy-3-methylbut-2-en-1-yl diphosphate synthase (flavodoxin) (370 aa).

Positions 271, 274, 306, and 313 each coordinate [4Fe-4S] cluster.

It belongs to the IspG family. [4Fe-4S] cluster is required as a cofactor.

It catalyses the reaction (2E)-4-hydroxy-3-methylbut-2-enyl diphosphate + oxidized [flavodoxin] + H2O + 2 H(+) = 2-C-methyl-D-erythritol 2,4-cyclic diphosphate + reduced [flavodoxin]. Its pathway is isoprenoid biosynthesis; isopentenyl diphosphate biosynthesis via DXP pathway; isopentenyl diphosphate from 1-deoxy-D-xylulose 5-phosphate: step 5/6. Its function is as follows. Converts 2C-methyl-D-erythritol 2,4-cyclodiphosphate (ME-2,4cPP) into 1-hydroxy-2-methyl-2-(E)-butenyl 4-diphosphate. This Actinobacillus pleuropneumoniae serotype 5b (strain L20) protein is 4-hydroxy-3-methylbut-2-en-1-yl diphosphate synthase (flavodoxin).